The following is a 239-amino-acid chain: Lactose-binding lectin-2 (239 aa).

Residues glutamate 122 and aspartate 124 each coordinate Mn(2+). Ca(2+) is bound by residues aspartate 124, tyrosine 126, asparagine 128, and aspartate 131. Residues aspartate 131 and histidine 137 each coordinate Mn(2+).

Belongs to the leguminous lectin family. In terms of assembly, homotetramer. Seed.

The protein resides in the vacuole. It is found in the aleurone grain. In terms of biological role, lactose-binding lectin. Also binds derivatives of galactose, glucose, lactose, and mannose. Binds O-glycoproteins such as mucins more strongly than N-glycoproteins. Shows agglutinating activity towards rabbit erythrocytes. This Cymbosema roseum (Dioclea purpurea) protein is Lactose-binding lectin-2.